The chain runs to 343 residues: Glycerol-3-phosphate dehydrogenase [NAD(P)+] (343 aa).

NADPH-binding residues include serine 11, tryptophan 12, arginine 32, and lysine 106. Lysine 106, glycine 137, and serine 139 together coordinate sn-glycerol 3-phosphate. An NADPH-binding site is contributed by alanine 141. The sn-glycerol 3-phosphate site is built by lysine 192, aspartate 245, serine 255, arginine 256, and asparagine 257. Lysine 192 functions as the Proton acceptor in the catalytic mechanism. Arginine 256 contributes to the NADPH binding site. Residues valine 280 and glutamate 282 each contribute to the NADPH site.

This sequence belongs to the NAD-dependent glycerol-3-phosphate dehydrogenase family.

Its subcellular location is the cytoplasm. The enzyme catalyses sn-glycerol 3-phosphate + NAD(+) = dihydroxyacetone phosphate + NADH + H(+). It catalyses the reaction sn-glycerol 3-phosphate + NADP(+) = dihydroxyacetone phosphate + NADPH + H(+). The protein operates within membrane lipid metabolism; glycerophospholipid metabolism. In terms of biological role, catalyzes the reduction of the glycolytic intermediate dihydroxyacetone phosphate (DHAP) to sn-glycerol 3-phosphate (G3P), the key precursor for phospholipid synthesis. The sequence is that of Glycerol-3-phosphate dehydrogenase [NAD(P)+] from Syntrophomonas wolfei subsp. wolfei (strain DSM 2245B / Goettingen).